Here is a 240-residue protein sequence, read N- to C-terminus: Phosphoribosylaminoimidazole-succinocarboxamide synthase (240 aa).

Belongs to the SAICAR synthetase family.

The enzyme catalyses 5-amino-1-(5-phospho-D-ribosyl)imidazole-4-carboxylate + L-aspartate + ATP = (2S)-2-[5-amino-1-(5-phospho-beta-D-ribosyl)imidazole-4-carboxamido]succinate + ADP + phosphate + 2 H(+). It functions in the pathway purine metabolism; IMP biosynthesis via de novo pathway; 5-amino-1-(5-phospho-D-ribosyl)imidazole-4-carboxamide from 5-amino-1-(5-phospho-D-ribosyl)imidazole-4-carboxylate: step 1/2. The sequence is that of Phosphoribosylaminoimidazole-succinocarboxamide synthase from Wolbachia pipientis wMel.